The primary structure comprises 380 residues: 4-hydroxy-3-methylbut-2-en-1-yl diphosphate synthase (flavodoxin) (380 aa).

[4Fe-4S] cluster contacts are provided by Cys-273, Cys-276, Cys-308, and Glu-315.

The protein belongs to the IspG family. [4Fe-4S] cluster is required as a cofactor.

It catalyses the reaction (2E)-4-hydroxy-3-methylbut-2-enyl diphosphate + oxidized [flavodoxin] + H2O + 2 H(+) = 2-C-methyl-D-erythritol 2,4-cyclic diphosphate + reduced [flavodoxin]. Its pathway is isoprenoid biosynthesis; isopentenyl diphosphate biosynthesis via DXP pathway; isopentenyl diphosphate from 1-deoxy-D-xylulose 5-phosphate: step 5/6. In terms of biological role, converts 2C-methyl-D-erythritol 2,4-cyclodiphosphate (ME-2,4cPP) into 1-hydroxy-2-methyl-2-(E)-butenyl 4-diphosphate. The chain is 4-hydroxy-3-methylbut-2-en-1-yl diphosphate synthase (flavodoxin) from Leifsonia xyli subsp. xyli (strain CTCB07).